The chain runs to 885 residues: Alanine--tRNA ligase (885 aa).

Residues H564, H568, C676, and H680 each contribute to the Zn(2+) site.

It belongs to the class-II aminoacyl-tRNA synthetase family. Zn(2+) serves as cofactor.

The protein resides in the cytoplasm. The catalysed reaction is tRNA(Ala) + L-alanine + ATP = L-alanyl-tRNA(Ala) + AMP + diphosphate. Catalyzes the attachment of alanine to tRNA(Ala) in a two-step reaction: alanine is first activated by ATP to form Ala-AMP and then transferred to the acceptor end of tRNA(Ala). Also edits incorrectly charged Ser-tRNA(Ala) and Gly-tRNA(Ala) via its editing domain. The protein is Alanine--tRNA ligase of Brucella ovis (strain ATCC 25840 / 63/290 / NCTC 10512).